A 411-amino-acid chain; its full sequence is MGIRNTLDKLEPHFHQGGKYEKFYALYEAVDTIFYSPPSVTKSTAHVRDGIDLKRIMITVWLCTFPAMFFGMYNAGLQANMAIGDGFGALGGWREAVTMALAGSHDPGSIWANFVLGATYFLPIYLVTFAVGGFWEVLFAVKRGHEVNEGFFVTSVLYALILPATIPLWQVALGITFGVVIGKEIFGGTGKNFLNPALTGRAFLYFAYPAQISGDSVWVAADGYTGATALSTAAQNGMSAVQQAYSWWDAFLGFIPGSVGETSTLAILIGAAVLLITRIASWRIMLGVFVGMALTAMLFTAIGSESNPMFGMPWYWHLVLGGFAFGMVFMATDPVSASMTDPGKLLFGFLIGVMTVLIRVVNPAFPEGIMLAILFANLFAPMIDHFFVQANIKRRMKRDAAYSPATNEETA.

3 helical membrane-spanning segments follow: residues 56–76, 121–141, and 161–181; these read IMIT…YNAG, FLPI…LFAV, and ILPA…GVVI. At Thr-228 the chain carries FMN phosphoryl threonine. 5 consecutive transmembrane segments (helical) span residues 254-274, 284-304, 309-329, 345-365, and 368-388; these read FIPG…AAVL, IMLG…AIGS, MFGM…GMVF, LLFG…NPAF, and GIML…HFFV.

Belongs to the NqrB/RnfD family. As to quaternary structure, composed of six subunits; NqrA, NqrB, NqrC, NqrD, NqrE and NqrF. Requires FMN as cofactor.

It localises to the cell inner membrane. The enzyme catalyses a ubiquinone + n Na(+)(in) + NADH + H(+) = a ubiquinol + n Na(+)(out) + NAD(+). NQR complex catalyzes the reduction of ubiquinone-1 to ubiquinol by two successive reactions, coupled with the transport of Na(+) ions from the cytoplasm to the periplasm. NqrA to NqrE are probably involved in the second step, the conversion of ubisemiquinone to ubiquinol. In Chromohalobacter salexigens (strain ATCC BAA-138 / DSM 3043 / CIP 106854 / NCIMB 13768 / 1H11), this protein is Na(+)-translocating NADH-quinone reductase subunit B.